Reading from the N-terminus, the 212-residue chain is ER lumen protein-retaining receptor (212 aa).

At Met1–Asn2 the chain is on the lumenal side. A helical transmembrane segment spans residues Ile3–Leu21. Over Lys22–Lys35 the chain is Cytoplasmic. Residues Ser36–Thr53 form a helical membrane-spanning segment. The Lumenal segment spans residues Thr54 to Ser61. The chain crosses the membrane as a helical span at residues Val62–Val80. The Cytoplasmic portion of the chain corresponds to Lys81 to Glu96. A helical transmembrane segment spans residues Phe97–Asn110. The Lumenal segment spans residues His111–Glu117. A helical membrane pass occupies residues Val118–Leu137. At Val138–Ser149 the chain is on the cytoplasmic side. The chain crosses the membrane as a helical span at residues His150 to Tyr168. The Lumenal segment spans residues Arg169 to Leu178. Residues Ile179–Ile199 traverse the membrane as a helical segment. Over Thr200 to Ala212 the chain is Cytoplasmic.

It belongs to the ERD2 family.

It localises to the endoplasmic reticulum membrane. Functionally, required for the retention of luminal endoplasmic reticulum proteins. Determines the specificity of the luminal ER protein retention system. Also required for normal vesicular traffic through the Golgi. The protein is ER lumen protein-retaining receptor (KdelR) of Drosophila melanogaster (Fruit fly).